The sequence spans 341 residues: Anthranilate phosphoribosyltransferase (341 aa).

5-phospho-alpha-D-ribose 1-diphosphate is bound by residues G79, 82–83 (GD), T87, 89–92 (NIST), 107–115 (KHGNRAATS), and S119. Position 79 (G79) interacts with anthranilate. A Mg(2+)-binding site is contributed by S91. N110 contacts anthranilate. R165 lines the anthranilate pocket. Mg(2+)-binding residues include D224 and E225.

Belongs to the anthranilate phosphoribosyltransferase family. In terms of assembly, homodimer. Mg(2+) is required as a cofactor.

The enzyme catalyses N-(5-phospho-beta-D-ribosyl)anthranilate + diphosphate = 5-phospho-alpha-D-ribose 1-diphosphate + anthranilate. The protein operates within amino-acid biosynthesis; L-tryptophan biosynthesis; L-tryptophan from chorismate: step 2/5. Its function is as follows. Catalyzes the transfer of the phosphoribosyl group of 5-phosphorylribose-1-pyrophosphate (PRPP) to anthranilate to yield N-(5'-phosphoribosyl)-anthranilate (PRA). The chain is Anthranilate phosphoribosyltransferase from Symbiobacterium thermophilum (strain DSM 24528 / JCM 14929 / IAM 14863 / T).